Consider the following 181-residue polypeptide: Early upstream open reading frame (181 aa).

It belongs to the EUO family.

The sequence is that of Early upstream open reading frame from Chlamydia caviae (strain ATCC VR-813 / DSM 19441 / 03DC25 / GPIC) (Chlamydophila caviae).